Consider the following 314-residue polypeptide: Homoserine kinase (314 aa).

Residue 96–106 participates in ATP binding; it reads PIGSGLGSSAC.

The protein belongs to the GHMP kinase family. Homoserine kinase subfamily.

The protein resides in the cytoplasm. It catalyses the reaction L-homoserine + ATP = O-phospho-L-homoserine + ADP + H(+). It participates in amino-acid biosynthesis; L-threonine biosynthesis; L-threonine from L-aspartate: step 4/5. Catalyzes the ATP-dependent phosphorylation of L-homoserine to L-homoserine phosphate. This chain is Homoserine kinase, found in Haemophilus influenzae (strain 86-028NP).